Here is a 214-residue protein sequence, read N- to C-terminus: Probable nicotinate-nucleotide adenylyltransferase (214 aa).

This sequence belongs to the NadD family.

It carries out the reaction nicotinate beta-D-ribonucleotide + ATP + H(+) = deamido-NAD(+) + diphosphate. Its pathway is cofactor biosynthesis; NAD(+) biosynthesis; deamido-NAD(+) from nicotinate D-ribonucleotide: step 1/1. In terms of biological role, catalyzes the reversible adenylation of nicotinate mononucleotide (NaMN) to nicotinic acid adenine dinucleotide (NaAD). The protein is Probable nicotinate-nucleotide adenylyltransferase of Mycolicibacterium vanbaalenii (strain DSM 7251 / JCM 13017 / BCRC 16820 / KCTC 9966 / NRRL B-24157 / PYR-1) (Mycobacterium vanbaalenii).